The primary structure comprises 110 residues: Replication initiation control protein YabA (110 aa).

Zn(2+)-binding residues include His-84, Cys-86, Cys-100, and Cys-103.

The protein belongs to the YabA family. In terms of assembly, homotetramer. Interacts with both DnaA and DnaN, acting as a bridge between these two proteins. Requires Zn(2+) as cofactor.

Its subcellular location is the cytoplasm. It localises to the nucleoid. Involved in control of chromosome replication initiation. Inhibits the cooperative binding of DnaA to the oriC region, thus negatively regulating initiation of chromosome replication. Inhibits the ability of DnaA-ATP to form a helix on DNA; does not disassemble preformed DnaA-DNA helices. Decreases the residence time of DnaA on the chromosome at its binding sites (oriC, replication forks and promoter-binding sites). Tethers DnaA to the replication machinery via the DNA polymerase beta sliding clamp subunit (dnaN). Associates with oriC and other DnaA targets on the chromosome in a DnaA-dependent manner. The polypeptide is Replication initiation control protein YabA (Streptococcus mutans serotype c (strain ATCC 700610 / UA159)).